The following is a 290-amino-acid chain: Ribosomal RNA small subunit methyltransferase A (290 aa).

The S-adenosyl-L-methionine site is built by asparagine 27, leucine 29, glycine 54, glutamate 75, aspartate 100, and asparagine 125.

It belongs to the class I-like SAM-binding methyltransferase superfamily. rRNA adenine N(6)-methyltransferase family. RsmA subfamily.

It localises to the cytoplasm. The enzyme catalyses adenosine(1518)/adenosine(1519) in 16S rRNA + 4 S-adenosyl-L-methionine = N(6)-dimethyladenosine(1518)/N(6)-dimethyladenosine(1519) in 16S rRNA + 4 S-adenosyl-L-homocysteine + 4 H(+). Functionally, specifically dimethylates two adjacent adenosines (A1518 and A1519) in the loop of a conserved hairpin near the 3'-end of 16S rRNA in the 30S particle. May play a critical role in biogenesis of 30S subunits. The polypeptide is Ribosomal RNA small subunit methyltransferase A (Streptococcus equi subsp. zooepidemicus (strain H70)).